The primary structure comprises 762 residues: Pyrophosphate-energized vacuolar membrane proton pump (762 aa).

Residues 1 to 6 are Intravacuolar-facing; sequence MAILGE. The helical transmembrane segment at 7 to 33 threads the bilayer; sequence LGTEILIPVCGVIGIVFAVAQWFIVSK. The Cytoplasmic segment spans residues 34–81; the sequence is VKVTPGAASAAAGAKNGYGDYLIEEEEGLNDHNVVVKCAEIQTAISEG. A helical membrane pass occupies residues 82-111; it reads ATSFLFTMYQYVGMFMVVFAAIIFLFLGSI. Residues 112–131 lie on the Intravacuolar side of the membrane; it reads EGFSTKGQPCTYSKGTCKPA. An intrachain disulfide couples Cys-121 to Cys-128. A helical transmembrane segment spans residues 132–159; sequence LYTALFSTASFLLGAITSLVSGFLGMKI. The Cytoplasmic portion of the chain corresponds to 160–182; it reads ATYANARTTLEARKGVGKAFITA. A helical membrane pass occupies residues 183 to 212; sequence FRSGAVMGFLLSSSGLVVLYITINVFKMYY. Residues 213–215 are Intravacuolar-facing; that stretch reads GDD. Residues 216 to 244 form a helical membrane-spanning segment; sequence WEGLFESITGYGLGGSSMALFGRVGGGIY. Over 245–282 the chain is Cytoplasmic; it reads TKAADVGADLVGKVERNIPEDDPRNPAVIADNVGDNVG. Residue Lys-246 coordinates substrate. Residues Asp-249, Asp-253, and Asp-279 each contribute to the Mg(2+) site. Residues 283–308 form a helical membrane-spanning segment; that stretch reads DIAGMGSDLFGSYAESSCAALVVASI. The Intravacuolar portion of the chain corresponds to 309 to 316; that stretch reads SSFGINHD. The chain crosses the membrane as a helical span at residues 317 to 342; it reads FTAMCYPLLVSSVGIIVCLLTTLFAT. The Cytoplasmic segment spans residues 343–350; sequence DFFEIKAA. The chain crosses the membrane as a helical span at residues 351-378; sequence NEIEPALKKQLIISTALMTVGVAVISWL. The Intravacuolar segment spans residues 379–397; that stretch reads ALPAKFTIFNFGAQKEVSN. A helical membrane pass occupies residues 398–421; sequence WGLFFCVAVGLWAGLIIGFVTEYY. Residues 422 to 443 lie on the Cytoplasmic side of the membrane; sequence TSNAYSPVQDVADSCRTGAATN. A helical membrane pass occupies residues 444-468; sequence VIFGLALGYKSVIIPIFAIAVSIYV. The Intravacuolar portion of the chain corresponds to 469–474; it reads SFSIAA. A helical transmembrane segment spans residues 475 to 501; it reads MYGIAMAALGMLSTMATGLAIDAYGPI. The Cytoplasmic portion of the chain corresponds to 502 to 530; that stretch reads SDNAGGIAEMAGMSHRIRERTDALDAAGN. 2 residues coordinate Mg(2+): Asp-503 and Asn-530. The chain crosses the membrane as a helical span at residues 531 to 559; that stretch reads TTAAIGKGFAIGSAALVSLALFGAFVSRA. Topologically, residues 560–569 are intravacuolar; sequence GVKVVDVLSP. The chain crosses the membrane as a helical span at residues 570 to 598; the sequence is KVFIGLIVGAMLPYWFSAMTMKSVGSAAL. Residues 599-627 lie on the Cytoplasmic side of the membrane; that stretch reads KMVEEVRRQFNTIPGLMEGTAKPDYATCV. The helical transmembrane segment at 628–656 threads the bilayer; sequence KISTDASIKEMIPPGALVMLTPLIVGTLF. Position 657 (Gly-657) is a topological domain, intravacuolar. A helical transmembrane segment spans residues 658 to 685; it reads VETLSGVLAGALVSGVQIAISASNTGGA. Over 686–728 the chain is Cytoplasmic; that stretch reads WDNAKKYIEAGNSEHARSLGPKGSDCHKAAVIGDTIGDPLKDT. The Mg(2+) site is built by Asp-687 and Asp-723. Residue Lys-726 participates in substrate binding. A helical membrane pass occupies residues 729–754; it reads SGPSLNILIKLMAVESLVFAPFFATY. The Intravacuolar segment spans residues 755–762; sequence GGLLFKYI.

It belongs to the H(+)-translocating pyrophosphatase (TC 3.A.10) family. K(+)-stimulated subfamily. As to quaternary structure, monomer.

Its subcellular location is the vacuole membrane. It catalyses the reaction diphosphate + H2O + H(+)(in) = 2 phosphate + 2 H(+)(out). In terms of biological role, contributes to the transtonoplast (from cytosol to vacuole lumen) H(+)-electrochemical potential difference. It establishes a proton gradient of similar and often greater magnitude than the H(+)-ATPase on the same membrane. This is Pyrophosphate-energized vacuolar membrane proton pump from Hordeum vulgare (Barley).